The following is a 423-amino-acid chain: Putative competence-damage inducible protein (423 aa).

It belongs to the CinA family.

This Streptococcus uberis (strain ATCC BAA-854 / 0140J) protein is Putative competence-damage inducible protein.